The following is a 148-amino-acid chain: Inner membrane protein YccF (148 aa).

The Periplasmic portion of the chain corresponds to 1 to 14 (MRTVLNILNFVLGG). Residues 15-37 (FATTLGWLLATLVSIVLIFTLPL) form a helical membrane-spanning segment. The Cytoplasmic portion of the chain corresponds to 38 to 76 (TRSCWEITKLSLVPYGNEAIHVDELNPAGKNVLLNTGGT). A helical membrane pass occupies residues 77 to 99 (VLNIFWLIFFGWWLCLMHIATGI). Residues 100 to 102 (AQC) are Periplasmic-facing. A helical membrane pass occupies residues 103–125 (ISIIGIPVGIANFKIAAIALWPV). The Cytoplasmic portion of the chain corresponds to 126–148 (GRRVVSVETAQAAREANARRRFE).

The protein resides in the cell inner membrane. This chain is Inner membrane protein YccF (yccF), found in Escherichia coli (strain K12).